We begin with the raw amino-acid sequence, 306 residues long: Acetyl-coenzyme A carboxylase carboxyl transferase subunit beta (306 aa).

One can recognise a CoA carboxyltransferase N-terminal domain in the interval 27–296 (LWHKCPSCEA…PKFVAAPIEP (270 aa)). Zn(2+) is bound by residues cysteine 31, cysteine 34, cysteine 50, and cysteine 53. The C4-type zinc finger occupies 31 to 53 (CPSCEAVLYRPELEKTLDVCPKC).

The protein belongs to the AccD/PCCB family. Acetyl-CoA carboxylase is a heterohexamer composed of biotin carboxyl carrier protein (AccB), biotin carboxylase (AccC) and two subunits each of ACCase subunit alpha (AccA) and ACCase subunit beta (AccD). Zn(2+) serves as cofactor.

It localises to the cytoplasm. The catalysed reaction is N(6)-carboxybiotinyl-L-lysyl-[protein] + acetyl-CoA = N(6)-biotinyl-L-lysyl-[protein] + malonyl-CoA. Its pathway is lipid metabolism; malonyl-CoA biosynthesis; malonyl-CoA from acetyl-CoA: step 1/1. Functionally, component of the acetyl coenzyme A carboxylase (ACC) complex. Biotin carboxylase (BC) catalyzes the carboxylation of biotin on its carrier protein (BCCP) and then the CO(2) group is transferred by the transcarboxylase to acetyl-CoA to form malonyl-CoA. This chain is Acetyl-coenzyme A carboxylase carboxyl transferase subunit beta, found in Pseudomonas fluorescens (strain Pf0-1).